A 555-amino-acid polypeptide reads, in one-letter code: uncharacterized protein (555 aa).

ABC transporter domains lie at 4–244 and 255–547; these read VKVK…PPYK and IQVR…ARFM. ATP contacts are provided by residues 36–43 and 292–299; these read GKSGAGKS and GPSGVGKT.

It belongs to the ABC transporter superfamily.

This is an uncharacterized protein from Methanocaldococcus jannaschii (strain ATCC 43067 / DSM 2661 / JAL-1 / JCM 10045 / NBRC 100440) (Methanococcus jannaschii).